A 370-amino-acid chain; its full sequence is Histidinol-phosphate aminotransferase 1 (370 aa).

At Lys229 the chain carries N6-(pyridoxal phosphate)lysine.

This sequence belongs to the class-II pyridoxal-phosphate-dependent aminotransferase family. Histidinol-phosphate aminotransferase subfamily. Homodimer. Requires pyridoxal 5'-phosphate as cofactor.

It catalyses the reaction L-histidinol phosphate + 2-oxoglutarate = 3-(imidazol-4-yl)-2-oxopropyl phosphate + L-glutamate. Its pathway is amino-acid biosynthesis; L-histidine biosynthesis; L-histidine from 5-phospho-alpha-D-ribose 1-diphosphate: step 7/9. The chain is Histidinol-phosphate aminotransferase 1 from Nitrosococcus oceani (strain ATCC 19707 / BCRC 17464 / JCM 30415 / NCIMB 11848 / C-107).